We begin with the raw amino-acid sequence, 89 residues long: Small ribosomal subunit protein uS15 (89 aa).

The protein belongs to the universal ribosomal protein uS15 family. As to quaternary structure, part of the 30S ribosomal subunit. Forms a bridge to the 50S subunit in the 70S ribosome, contacting the 23S rRNA.

One of the primary rRNA binding proteins, it binds directly to 16S rRNA where it helps nucleate assembly of the platform of the 30S subunit by binding and bridging several RNA helices of the 16S rRNA. In terms of biological role, forms an intersubunit bridge (bridge B4) with the 23S rRNA of the 50S subunit in the ribosome. The polypeptide is Small ribosomal subunit protein uS15 (Prochlorococcus marinus subsp. pastoris (strain CCMP1986 / NIES-2087 / MED4)).